A 491-amino-acid polypeptide reads, in one-letter code: Probable protein phosphatase 2C 6 (491 aa).

A compositionally biased stretch (basic and acidic residues) spans 1-16; it reads MGLCHSKIDKTTRKET. The segment at 1-39 is disordered; the sequence is MGLCHSKIDKTTRKETGATSTATTTVERQSSGRLRRPRD. Positions 17–28 are enriched in low complexity; the sequence is GATSTATTTVER. Residues 64–376 enclose the PPM-type phosphatase domain; it reads IACLYTQQGK…DDCAVVCLFL (313 aa). Mn(2+) contacts are provided by D100, G101, D321, and D367. Residues 391–422 form a disordered region; sequence VNHSHEESTESVTITSSKDADKKEEASTETNE.

Belongs to the PP2C family. Mg(2+) is required as a cofactor. It depends on Mn(2+) as a cofactor.

The enzyme catalyses O-phospho-L-seryl-[protein] + H2O = L-seryl-[protein] + phosphate. The catalysed reaction is O-phospho-L-threonyl-[protein] + H2O = L-threonyl-[protein] + phosphate. The polypeptide is Probable protein phosphatase 2C 6 (Arabidopsis thaliana (Mouse-ear cress)).